We begin with the raw amino-acid sequence, 205 residues long: Putative lipoprotein LppC (205 aa).

A signal peptide spans 1–27 (MESPMTSTLHRTPLATAGLALVVALGG). A lipid anchor (N-palmitoyl cysteine) is attached at Cys28. Cys28 carries S-diacylglycerol cysteine lipidation. The interval 126–145 (GSTADGQTPAGGHSVPNSGG) is disordered.

The protein belongs to the UPF0098 family.

It is found in the cell membrane. This is Putative lipoprotein LppC (lppC) from Mycobacterium tuberculosis (strain CDC 1551 / Oshkosh).